A 184-amino-acid polypeptide reads, in one-letter code: MIEHNPTTIYGTTIVTVRKDGKVVIAGDGQVSLGNTVMKGNARKVRRIGKGNVIAGFAGTTADAFTLLERLEAKLEQYPDQLMRASVELAKDWRTDRYLRKLEAMMLVADSKVTLALTGTGDVLEPEQGVMAIGSGGNYALAAARALIETDKSAEEIARKAMNIAADICIYTNHNIIVESLDAQ.

The active site involves Thr-12. Positions 166, 169, and 172 each coordinate Na(+).

It belongs to the peptidase T1B family. HslV subfamily. A double ring-shaped homohexamer of HslV is capped on each side by a ring-shaped HslU homohexamer. The assembly of the HslU/HslV complex is dependent on binding of ATP.

The protein resides in the cytoplasm. It carries out the reaction ATP-dependent cleavage of peptide bonds with broad specificity.. Allosterically activated by HslU binding. Its function is as follows. Protease subunit of a proteasome-like degradation complex believed to be a general protein degrading machinery. The sequence is that of ATP-dependent protease subunit HslV from Brucella abortus (strain S19).